The chain runs to 624 residues: Membrane protein insertase YidC (624 aa).

The helical transmembrane segment at 8-28 (MIIAIALSLAVLLGWNYFVTA) threads the bilayer. Residues 36–95 (QQQAAQVNPSQGVNPSQGVDPSQGVNASPSPKEGGPSAPVPGTLPGAAGGSPQAALARDE) are disordered. Residues 43 to 64 (NPSQGVNPSQGVDPSQGVNASP) show a composition bias toward polar residues. Transmembrane regions (helical) follow at residues 370-390 (FDLL…FKAL), 396-416 (LFGN…LFFL), 470-490 (WPVL…FVTI), 526-542 (LLHL…TMFL), and 559-579 (FTFM…GLVI).

Belongs to the OXA1/ALB3/YidC family. Type 1 subfamily. As to quaternary structure, interacts with the Sec translocase complex via SecD. Specifically interacts with transmembrane segments of nascent integral membrane proteins during membrane integration.

The protein resides in the cell inner membrane. Functionally, required for the insertion and/or proper folding and/or complex formation of integral membrane proteins into the membrane. Involved in integration of membrane proteins that insert both dependently and independently of the Sec translocase complex, as well as at least some lipoproteins. Aids folding of multispanning membrane proteins. In Methylobacterium sp. (strain 4-46), this protein is Membrane protein insertase YidC.